The following is a 517-amino-acid chain: ATP synthase subunit alpha (517 aa).

174–181 (GDRQTGKT) contacts ATP.

This sequence belongs to the ATPase alpha/beta chains family. In terms of assembly, F-type ATPases have 2 components, CF(1) - the catalytic core - and CF(0) - the membrane proton channel. CF(1) has five subunits: alpha(3), beta(3), gamma(1), delta(1), epsilon(1). CF(0) has three main subunits: a(1), b(2) and c(9-12). The alpha and beta chains form an alternating ring which encloses part of the gamma chain. CF(1) is attached to CF(0) by a central stalk formed by the gamma and epsilon chains, while a peripheral stalk is formed by the delta and b chains.

Its subcellular location is the cell inner membrane. The enzyme catalyses ATP + H2O + 4 H(+)(in) = ADP + phosphate + 5 H(+)(out). In terms of biological role, produces ATP from ADP in the presence of a proton gradient across the membrane. The alpha chain is a regulatory subunit. The protein is ATP synthase subunit alpha of Polaromonas sp. (strain JS666 / ATCC BAA-500).